We begin with the raw amino-acid sequence, 85 residues long: Cytochrome c6 (85 aa).

Residues Cys-14, Cys-17, His-18, and Met-58 each coordinate heme c.

The protein belongs to the cytochrome c family. PetJ subfamily. As to quaternary structure, monomer. In terms of processing, binds 1 heme c group covalently per subunit.

The protein resides in the plastid. It is found in the chloroplast thylakoid lumen. Its function is as follows. Functions as an electron carrier between membrane-bound cytochrome b6-f and photosystem I in oxygenic photosynthesis. This Petalonia fascia (False kelp) protein is Cytochrome c6 (petJ).